The primary structure comprises 193 residues: Protein CURVATURE THYLAKOID 1D, chloroplastic (193 aa).

Residues 1-51 (MELCTRSTTIITHLPASFNGHGYLAGKSVDRISLPLQRNVASLVLQSRTLR) constitute a chloroplast transit peptide. Residues 52 to 117 (CSRKFPGETV…NDIKLDSDKT (66 aa)) are Stromal-facing. The helical transmembrane segment at 118 to 138 (YSILLYGSGAIVALYLTSAIV) threads the bilayer. Topologically, residues 139–142 (SSLE) are lumenal. The helical transmembrane segment at 143 to 163 (AIPLFPKLMEVVGLGYTLWFT) threads the bilayer. The Stromal portion of the chain corresponds to 164–193 (TRYLLFKRNREELKTKVSEIKKQVLGSDSE).

The protein belongs to the CURT family. In terms of assembly, homo- and heterodimers and trimers.

The protein localises to the plastid. Its subcellular location is the chloroplast thylakoid membrane. Determines thylakoid architecture by inducing membrane curvature. The polypeptide is Protein CURVATURE THYLAKOID 1D, chloroplastic (CURT1D) (Arabidopsis thaliana (Mouse-ear cress)).